The following is a 165-amino-acid chain: 2-C-methyl-D-erythritol 2,4-cyclodiphosphate synthase (165 aa).

A divalent metal cation is bound by residues aspartate 13 and histidine 15. Residues 13 to 15 (DRH) and 39 to 40 (HS) contribute to the 4-CDP-2-C-methyl-D-erythritol 2-phosphate site. Histidine 47 lines the a divalent metal cation pocket. Residues 61 to 63 (DIG) and phenylalanine 141 contribute to the 4-CDP-2-C-methyl-D-erythritol 2-phosphate site.

Belongs to the IspF family. In terms of assembly, homotrimer. Requires a divalent metal cation as cofactor.

The enzyme catalyses 4-CDP-2-C-methyl-D-erythritol 2-phosphate = 2-C-methyl-D-erythritol 2,4-cyclic diphosphate + CMP. Its pathway is isoprenoid biosynthesis; isopentenyl diphosphate biosynthesis via DXP pathway; isopentenyl diphosphate from 1-deoxy-D-xylulose 5-phosphate: step 4/6. Functionally, involved in the biosynthesis of isopentenyl diphosphate (IPP) and dimethylallyl diphosphate (DMAPP), two major building blocks of isoprenoid compounds. Catalyzes the conversion of 4-diphosphocytidyl-2-C-methyl-D-erythritol 2-phosphate (CDP-ME2P) to 2-C-methyl-D-erythritol 2,4-cyclodiphosphate (ME-CPP) with a corresponding release of cytidine 5-monophosphate (CMP). The polypeptide is 2-C-methyl-D-erythritol 2,4-cyclodiphosphate synthase (Thermotoga neapolitana (strain ATCC 49049 / DSM 4359 / NBRC 107923 / NS-E)).